The chain runs to 538 residues: Cryptic outer membrane porin BglH (538 aa).

Positions 1–25 (MFRRNLITSAILLMAPLAFSAQSLA) are cleaved as a signal peptide. The disordered stretch occupies residues 52-82 (KDEEKKKYTPATVNRSVSTNDQGYAANPFPT). Residues 62 to 73 (ATVNRSVSTNDQ) show a composition bias toward polar residues.

The protein belongs to the porin LamB (TC 1.B.3) family. In terms of assembly, homomonomer; no physical evidence of a homotrimer has been found, however conductance experiments suggest it may be a homotrimer. The monomer probably consists of 18 antiparallel beta-strands.

It is found in the cell outer membrane. Part of a cryptic operon that is poorly expressed in vivo. May be an ancestral sugar porin with a broad carbohydrate specificity; it binds aromatic beta-D-glucosides such as arbutin and salicin, but with low affinity compared to the binding of maltooligosaccharides to the LamB porin. This Escherichia coli (strain K12) protein is Cryptic outer membrane porin BglH (bglH).